The sequence spans 367 residues: tRNA-specific 2-thiouridylase MnmA (367 aa).

ATP is bound by residues 12-19 (GMSGGVDS) and Met-38. Residues 98–100 (NPD) are interaction with target base in tRNA. Cys-103 (nucleophile) is an active-site residue. Cys-103 and Cys-200 are oxidised to a cystine. Residue Gly-128 coordinates ATP. An interaction with tRNA region spans residues 150–152 (KDQ). Cys-200 functions as the Cysteine persulfide intermediate in the catalytic mechanism. Residues 312 to 313 (RY) are interaction with tRNA.

The protein belongs to the MnmA/TRMU family. Interacts with TusE.

The protein resides in the cytoplasm. It carries out the reaction S-sulfanyl-L-cysteinyl-[protein] + uridine(34) in tRNA + AH2 + ATP = 2-thiouridine(34) in tRNA + L-cysteinyl-[protein] + A + AMP + diphosphate + H(+). In terms of biological role, catalyzes the 2-thiolation of uridine at the wobble position (U34) of tRNA(Lys), tRNA(Glu) and tRNA(Gln), leading to the formation of s(2)U34, the first step of tRNA-mnm(5)s(2)U34 synthesis. Sulfur is provided by IscS, via a sulfur-relay system. Binds ATP and its substrate tRNAs. The sequence is that of tRNA-specific 2-thiouridylase MnmA from Serratia proteamaculans (strain 568).